Here is a 350-residue protein sequence, read N- to C-terminus: Thymidine kinase (350 aa).

Residue 15–22 (GAHGLGKT) participates in ATP binding. Glutamate 44 (proton acceptor) is an active-site residue. Residue glutamine 88 coordinates substrate. Residue arginine 178 coordinates ATP. Residue arginine 184 coordinates substrate.

It belongs to the herpesviridae thymidine kinase family. In terms of assembly, homodimer.

The catalysed reaction is thymidine + ATP = dTMP + ADP + H(+). In terms of biological role, catalyzes the transfer of the gamma-phospho group of ATP to thymidine to generate dTMP in the salvage pathway of pyrimidine synthesis. The dTMP serves as a substrate for DNA polymerase during viral DNA replication. Allows the virus to be reactivated and to grow in non-proliferative cells lacking a high concentration of phosphorylated nucleic acid precursors. In Bos taurus (Bovine), this protein is Thymidine kinase.